The chain runs to 550 residues: Formate--tetrahydrofolate ligase (550 aa).

Residue 62–69 (TPAGEGKS) participates in ATP binding.

The protein belongs to the formate--tetrahydrofolate ligase family.

It carries out the reaction (6S)-5,6,7,8-tetrahydrofolate + formate + ATP = (6R)-10-formyltetrahydrofolate + ADP + phosphate. It participates in one-carbon metabolism; tetrahydrofolate interconversion. This Corynebacterium diphtheriae (strain ATCC 700971 / NCTC 13129 / Biotype gravis) protein is Formate--tetrahydrofolate ligase.